An 806-amino-acid polypeptide reads, in one-letter code: Protein translocase subunit SecA 2 (806 aa).

Residues Gln122, 140–144 (GEGKT), and Asp533 each bind ATP.

Belongs to the SecA family. Monomer and homodimer. Part of the essential Sec protein translocation apparatus which comprises SecA, SecYEG and auxiliary proteins SecDF. Other proteins may also be involved.

Its subcellular location is the cell membrane. The protein localises to the cytoplasm. It carries out the reaction ATP + H2O + cellular proteinSide 1 = ADP + phosphate + cellular proteinSide 2.. Functionally, part of the Sec protein translocase complex. Interacts with the SecYEG preprotein conducting channel. Has a central role in coupling the hydrolysis of ATP to the transfer of proteins into and across the cell membrane, serving as an ATP-driven molecular motor driving the stepwise translocation of polypeptide chains across the membrane. The protein is Protein translocase subunit SecA 2 of Mycobacterium ulcerans (strain Agy99).